The following is a 68-amino-acid chain: U1-hexatoxin-Hv1a (68 aa).

Cystine bridges form between Cys3-Cys14, Cys8-Cys22, Cys13-Cys48, Cys32-Cys56, and Cys50-Cys63.

Belongs to the MIT-like AcTx family. In terms of tissue distribution, expressed by the venom gland.

Its subcellular location is the secreted. The chain is U1-hexatoxin-Hv1a from Hadronyche versuta (Blue mountains funnel-web spider).